Consider the following 192-residue polypeptide: MTIKKPTKEEAKEAVRTLLRFIGEDPNREGLFKTPDRVIKSYEEIFSGYGKNIEEILETKFSDTGNFQDFISLEGIKFTSFCEHHMLPFSGTVHIAYIPDNCIVGISKLARIVNAFAKRLQIQEKMTVQIAESVQENLKPLGVAVKISALHSCMSMRGVMQDNSIMNTMHYTGIFAEQQKYRHEFLNLTSKK.

Zn(2+)-binding residues include Cys-82, His-85, and Cys-153.

This sequence belongs to the GTP cyclohydrolase I family. In terms of assembly, toroid-shaped homodecamer, composed of two pentamers of five dimers.

The enzyme catalyses GTP + H2O = 7,8-dihydroneopterin 3'-triphosphate + formate + H(+). The protein operates within cofactor biosynthesis; 7,8-dihydroneopterin triphosphate biosynthesis; 7,8-dihydroneopterin triphosphate from GTP: step 1/1. The polypeptide is GTP cyclohydrolase 1 (Rickettsia bellii (strain OSU 85-389)).